Reading from the N-terminus, the 352-residue chain is Deoxyhypusine synthase-like protein (352 aa).

It belongs to the deoxyhypusine synthase family.

The sequence is that of Deoxyhypusine synthase-like protein from Coxiella burnetii (strain Dugway 5J108-111).